The sequence spans 253 residues: Sugar fermentation stimulation protein homolog (253 aa).

The protein belongs to the SfsA family.

The protein is Sugar fermentation stimulation protein homolog of Chromohalobacter salexigens (strain ATCC BAA-138 / DSM 3043 / CIP 106854 / NCIMB 13768 / 1H11).